Here is a 218-residue protein sequence, read N- to C-terminus: Putative pre-16S rRNA nuclease (218 aa).

Belongs to the YqgF nuclease family.

It localises to the cytoplasm. Could be a nuclease involved in processing of the 5'-end of pre-16S rRNA. In Thermotoga maritima (strain ATCC 43589 / DSM 3109 / JCM 10099 / NBRC 100826 / MSB8), this protein is Putative pre-16S rRNA nuclease.